Here is a 466-residue protein sequence, read N- to C-terminus: Putative D-3-phosphoglycerate dehydrogenase (466 aa).

Positions 1-15 (MDIKGGRRGNVEDSL) are enriched in basic and acidic residues. Residues 1–26 (MDIKGGRRGNVEDSLNKLSLSPPDNN) are disordered. The span at 16 to 26 (NKLSLSPPDNN) shows a compositional bias: polar residues. A Phosphoserine modification is found at Ser87. NAD(+) contacts are provided by residues 205–206 (HI) and Asp225. Ser258 bears the Phosphoserine mark. Residues 282 to 284 (ASR) and Asp308 contribute to the NAD(+) site. Residue Arg284 is part of the active site. Glu313 is an active-site residue. Residue His344 is the Proton donor of the active site. 344–347 (HIGG) serves as a coordination point for NAD(+). The ACT domain occupies 396–466 (RVLFVHRNVP…PCKINTRLLY (71 aa)).

The protein belongs to the D-isomer specific 2-hydroxyacid dehydrogenase family.

The enzyme catalyses (2R)-3-phosphoglycerate + NAD(+) = 3-phosphooxypyruvate + NADH + H(+). It catalyses the reaction (R)-2-hydroxyglutarate + NAD(+) = 2-oxoglutarate + NADH + H(+). It functions in the pathway amino-acid biosynthesis; L-serine biosynthesis; L-serine from 3-phospho-D-glycerate: step 1/3. Functionally, catalyzes the reversible oxidation of 3-phospho-D-glycerate to 3-phosphonooxypyruvate, the first step of the phosphorylated L-serine biosynthesis pathway. Also catalyzes the reversible oxidation of 2-hydroxyglutarate to 2-oxoglutarate. The protein is Putative D-3-phosphoglycerate dehydrogenase of Schizosaccharomyces pombe (strain 972 / ATCC 24843) (Fission yeast).